The sequence spans 258 residues: Pimeloyl-[acyl-carrier protein] methyl ester esterase (258 aa).

The AB hydrolase-1 domain maps to 16–244; that stretch reads LVLVHGWGMN…QSSHAPFMTE (229 aa). Residues Trp22, 82–83, and 146–150 each bind substrate; these read SL and FMALQ. Residue Ser82 is the Nucleophile of the active site. Residues Asp210 and His238 contribute to the active site. His238 serves as a coordination point for substrate.

It belongs to the AB hydrolase superfamily. Carboxylesterase BioH family. As to quaternary structure, monomer.

It localises to the cytoplasm. It catalyses the reaction 6-carboxyhexanoyl-[ACP] methyl ester + H2O = 6-carboxyhexanoyl-[ACP] + methanol + H(+). It functions in the pathway cofactor biosynthesis; biotin biosynthesis. Its function is as follows. The physiological role of BioH is to remove the methyl group introduced by BioC when the pimeloyl moiety is complete. It allows to synthesize pimeloyl-ACP via the fatty acid synthetic pathway through the hydrolysis of the ester bonds of pimeloyl-ACP esters. The chain is Pimeloyl-[acyl-carrier protein] methyl ester esterase from Vibrio atlanticus (strain LGP32) (Vibrio splendidus (strain Mel32)).